The primary structure comprises 190 residues: dTTP/UTP pyrophosphatase (190 aa).

The Proton acceptor role is filled by Asp-69.

This sequence belongs to the Maf family. YhdE subfamily. The cofactor is a divalent metal cation.

The protein localises to the cytoplasm. It carries out the reaction dTTP + H2O = dTMP + diphosphate + H(+). It catalyses the reaction UTP + H2O = UMP + diphosphate + H(+). Nucleoside triphosphate pyrophosphatase that hydrolyzes dTTP and UTP. May have a dual role in cell division arrest and in preventing the incorporation of modified nucleotides into cellular nucleic acids. The chain is dTTP/UTP pyrophosphatase from Sphingopyxis alaskensis (strain DSM 13593 / LMG 18877 / RB2256) (Sphingomonas alaskensis).